Consider the following 361-residue polypeptide: Phosphoribosylformylglycinamidine cyclo-ligase (361 aa).

The protein belongs to the AIR synthase family.

It localises to the cytoplasm. The enzyme catalyses 2-formamido-N(1)-(5-O-phospho-beta-D-ribosyl)acetamidine + ATP = 5-amino-1-(5-phospho-beta-D-ribosyl)imidazole + ADP + phosphate + H(+). It functions in the pathway purine metabolism; IMP biosynthesis via de novo pathway; 5-amino-1-(5-phospho-D-ribosyl)imidazole from N(2)-formyl-N(1)-(5-phospho-D-ribosyl)glycinamide: step 2/2. The sequence is that of Phosphoribosylformylglycinamidine cyclo-ligase from Bartonella henselae (strain ATCC 49882 / DSM 28221 / CCUG 30454 / Houston 1) (Rochalimaea henselae).